The following is a 240-amino-acid chain: 4-hydroxy-tetrahydrodipicolinate reductase (240 aa).

NAD(+) is bound by residues 79–81 (ATT) and 103–106 (SANM). The active-site Proton donor/acceptor is histidine 135. Histidine 136 is a (S)-2,3,4,5-tetrahydrodipicolinate binding site. Lysine 139 (proton donor) is an active-site residue. 145–146 (GT) contacts (S)-2,3,4,5-tetrahydrodipicolinate.

Belongs to the DapB family.

The protein resides in the cytoplasm. It carries out the reaction (S)-2,3,4,5-tetrahydrodipicolinate + NAD(+) + H2O = (2S,4S)-4-hydroxy-2,3,4,5-tetrahydrodipicolinate + NADH + H(+). The catalysed reaction is (S)-2,3,4,5-tetrahydrodipicolinate + NADP(+) + H2O = (2S,4S)-4-hydroxy-2,3,4,5-tetrahydrodipicolinate + NADPH + H(+). Its pathway is amino-acid biosynthesis; L-lysine biosynthesis via DAP pathway; (S)-tetrahydrodipicolinate from L-aspartate: step 4/4. In terms of biological role, catalyzes the conversion of 4-hydroxy-tetrahydrodipicolinate (HTPA) to tetrahydrodipicolinate. This chain is 4-hydroxy-tetrahydrodipicolinate reductase, found in Staphylococcus aureus (strain USA300).